Reading from the N-terminus, the 296-residue chain is Cytidine deaminase (296 aa).

2 CMP/dCMP-type deaminase domains span residues 48-168 (DVDA…FGPV) and 187-296 (QNVN…FIEE). Position 89-91 (89-91 (NME)) interacts with substrate. Residue histidine 102 coordinates Zn(2+). The active-site Proton donor is the glutamate 104. Zn(2+)-binding residues include cysteine 129 and cysteine 132.

The protein belongs to the cytidine and deoxycytidylate deaminase family. Homodimer. It depends on Zn(2+) as a cofactor.

The enzyme catalyses cytidine + H2O + H(+) = uridine + NH4(+). It catalyses the reaction 2'-deoxycytidine + H2O + H(+) = 2'-deoxyuridine + NH4(+). This enzyme scavenges exogenous and endogenous cytidine and 2'-deoxycytidine for UMP synthesis. This is Cytidine deaminase from Pectobacterium atrosepticum (strain SCRI 1043 / ATCC BAA-672) (Erwinia carotovora subsp. atroseptica).